Consider the following 447-residue polypeptide: Cobyrinate a,c-diamide synthase (447 aa).

A GATase cobBQ-type domain is found at 247 to 435 (RIGVAIDEAF…IHIHAASCPQ (189 aa)). Cys-329 functions as the Nucleophile in the catalytic mechanism.

This sequence belongs to the CobB/CbiA family. The cofactor is Mg(2+).

The catalysed reaction is cob(II)yrinate + 2 L-glutamine + 2 ATP + 2 H2O = cob(II)yrinate a,c diamide + 2 L-glutamate + 2 ADP + 2 phosphate + 2 H(+). It catalyses the reaction Ni-sirohydrochlorin + 2 L-glutamine + 2 ATP + 2 H2O = Ni-sirohydrochlorin a,c-diamide + 2 L-glutamate + 2 ADP + 2 phosphate + 2 H(+). Its pathway is cofactor biosynthesis; adenosylcobalamin biosynthesis; cob(II)yrinate a,c-diamide from sirohydrochlorin (anaerobic route): step 10/10. Its function is as follows. Catalyzes the ATP-dependent amidation of the two carboxylate groups at positions a and c of cobyrinate, using either L-glutamine or ammonia as the nitrogen source. Involved in the biosynthesis of the unique nickel-containing tetrapyrrole coenzyme F430, the prosthetic group of methyl-coenzyme M reductase (MCR), which plays a key role in methanogenesis and anaerobic methane oxidation. Catalyzes the ATP-dependent amidation of the two carboxylate groups at positions a and c of Ni-sirohydrochlorin, using L-glutamine or ammonia as the nitrogen source. This is Cobyrinate a,c-diamide synthase from Methanothermobacter thermautotrophicus (strain ATCC 29096 / DSM 1053 / JCM 10044 / NBRC 100330 / Delta H) (Methanobacterium thermoautotrophicum).